Here is a 623-residue protein sequence, read N- to C-terminus: Chaperone protein HtpG (623 aa).

An a; substrate-binding region spans residues 1 to 336 (MVSKQQTMGF…ASDLPLNISR (336 aa)). Residues 337–550 (EILQDNKQVE…EQDMGLEMQR (214 aa)) are b. The interval 551 to 623 (ILQAAGQQVP…NRVNRLLVSS (73 aa)) is c.

This sequence belongs to the heat shock protein 90 family. Homodimer.

It is found in the cytoplasm. Its function is as follows. Molecular chaperone. Has ATPase activity. This is Chaperone protein HtpG from Legionella pneumophila subsp. pneumophila (strain Philadelphia 1 / ATCC 33152 / DSM 7513).